We begin with the raw amino-acid sequence, 153 residues long: Aspartate carbamoyltransferase regulatory chain (153 aa).

Zn(2+) is bound by residues C109, C114, C138, and C141.

It belongs to the PyrI family. As to quaternary structure, contains catalytic and regulatory chains. Requires Zn(2+) as cofactor.

In terms of biological role, involved in allosteric regulation of aspartate carbamoyltransferase. The protein is Aspartate carbamoyltransferase regulatory chain of Vibrio parahaemolyticus serotype O3:K6 (strain RIMD 2210633).